Reading from the N-terminus, the 1055-residue chain is Ubiquitin carboxyl-terminal hydrolase 25 (1055 aa).

Residues 14-57 form the UBA-like domain; it reads QKHQQTFLNQLREITGINDTQILQQALKDSNGNLELAVAFLTAK. The interval 77 to 102 is SUMO interaction domain (SIM); sequence NDRYISVGSQADTNVIDLTGDDKDDL. At Ser85 the chain carries Phosphoserine. Positions 89-95 match the Required for SUMO paralog-specific binding motif; that stretch reads TNVIDLT. UIM domains are found at residues 97–116 and 123–140; these read DDKD…SNRA and TDEE…IAEN. A Glycyl lysine isopeptide (Lys-Gly) (interchain with G-Cter in SUMO); alternate cross-link involves residue Lys99. Lys99 participates in a covalent cross-link: Glycyl lysine isopeptide (Lys-Gly) (interchain with G-Cter in ubiquitin); alternate. Positions 169–657 constitute a USP domain; the sequence is VGLKNVGNTC…SAYCLMYIND (489 aa). Cys178 is an active-site residue. The disordered stretch occupies residues 464-507; sequence VCTSPVDDIDASSPPSGSIPSQTLPSTTEQQGALSSELPSTSPS. The span at 476–496 shows a compositional bias: polar residues; that stretch reads SPPSGSIPSQTLPSTTEQQGA. Residues 497–507 are compositionally biased toward low complexity; that stretch reads LSSELPSTSPS. A coiled-coil region spans residues 541 to 578; it reads TEEELSVLESCLHRWRTEIENDTRDLQESISRIHRTIE. Active-site residues include His599 and His607. A coiled-coil region spans residues 684-717; sequence DLRDFVEEDNQRFEKELEEWDAQLAQKALQEKLL. Residues 727 to 749 form a disordered region; the sequence is TSVTTAQAAGDPEYLEQPSRSDF. Position 740 is a phosphotyrosine (Tyr740).

Belongs to the peptidase C19 family. Homotetramer, inhibited form. Homodimer, active form. Interacts with ACTA1 (via its C-terminus); the interaction occurs for all isoforms but is strongest for isoform USP25m in muscle differentiating cells. Interacts (isoform USP25m only) with MYBPC1; the interaction prevents proteasomal degradation of MYBPC1. Interacts (isoform USP25m only) with FLNC (via filament repeats 17-18, 20-21 and 24). Interacts with GAPDH. Interacts with SUMO3; the interaction sumoylates efficiently USP25. Interacts with SUMO2; the interaction sumoylates efficiently USP25. Interacts with SUMO1; the interaction only weakly sumoylates USP25. Interacts with SYK; phosphorylates USP25 and regulates USP25 intracellular levels. Post-translationally, acetylated. Sumoylation impairs binding to and hydrolysis of ubiquitin chains. Sumoylated preferentially with SUMO2 or SUMO3. Desumoylated by SENP1. Polyubiquitinated by SMURF1 by promoting the 'Lys-48'-linkage leading to proteasomal degradation. In terms of processing, preferentially monoubiquitinated but can also be polyubiquitinated. Autodeubiquitinated. Ubiquitination activates the enzymatic activity either by preventing sumoylation or by allowing novel interactions. Post-translationally, phosphorylation in the C-terminal by SYK regulates USP25 cellular levels. Isoform USP25a is found in most adult and fetal tissues; expression is moderately high in testis, pancreas, kidney, skeletal muscle, liver, lung, placenta, heart, but very low in peripheral blood, colon, small intestine, ovary, prostate, thymus and spleen. Expressed in the brain, with high levels in the cerebral cortex. Isoform USP25b is found in all tissues except heart and skeletal muscle. Isoform USP25m is heart and skeletal muscle specific.

The protein localises to the cytoplasm. The protein resides in the nucleus. The enzyme catalyses Thiol-dependent hydrolysis of ester, thioester, amide, peptide and isopeptide bonds formed by the C-terminal Gly of ubiquitin (a 76-residue protein attached to proteins as an intracellular targeting signal).. Deubiquitinating enzyme that hydrolyzes ubiquitin moieties conjugated to substrates and thus, functions in various biological processes including inflammation and immune response. Modulates the Wnt/beta-catenin pathway by deubiquitinating and stabilizing tankyrases TNKS1 and TNKS2. Regulates KEAP1-NRF2 axis in the defense against oxidative assaults by deubiquitinating KEAP1 and protecting it from degradation leading to degradation of the NRF2 transcription factor that is responsible for mounting an anti-oxidation gene expression program. Positively regulates RNA virus-induced innate signaling by interacting with and deubiquitinating ERLIN1 and ERLIN2. In turn, restricts virus production by regulating cholesterol biosynthetic flux. Acts as a negative regulator of interleukin-17-mediated signaling and inflammation through the removal of 'Lys-63'-linked ubiquitination of TRAF5 and TRAF6. Prevents the ubiquitination and degradation of TRAF3 to reduce the phosphorylation levels of JNK and P38, the secretion of IL-1B and to induce endotoxin tolerance. Functionally, the muscle-specific isoform (USP25m) may have a role in the regulation of muscular differentiation and function. The chain is Ubiquitin carboxyl-terminal hydrolase 25 (USP25) from Homo sapiens (Human).